Reading from the N-terminus, the 365-residue chain is Snurportin-1 (365 aa).

The IBB domain maps to 10-72 (GGVALAAPNS…RLAEGDWAGV (63 aa)). 2 disordered regions span residues 15–34 (AAPN…KGRG) and 69–90 (WAGV…EMEV). A compositionally biased stretch (acidic residues) spans 73–90 (ESDEDGGEDGDGEEEMEV). The interaction with m3G-cap structure stretch occupies residues 129-131 (GKR). The necessary for binding to the m3G-cap structure stretch occupies residues 211–333 (LSSKIQEEEG…GKAQPSAEAA (123 aa)). Residues 317–365 (RSKKLAAGKAQPSAEAAARNGHYELEHLSTPQPANSAQGQEEAGSQMEN) are disordered. Polar residues predominate over residues 345 to 355 (STPQPANSAQG).

This sequence belongs to the snurportin family.

It localises to the nucleus. The protein localises to the cytoplasm. Functionally, functions as an U snRNP-specific nuclear import adapter. Involved in the trimethylguanosine (m3G)-cap-dependent nuclear import of U snRNPs. Binds specifically to the terminal m3G-cap U snRNAs. This chain is Snurportin-1 (SNUPN), found in Gallus gallus (Chicken).